The sequence spans 97 residues: UPF0235 protein Ppha_2415 (97 aa).

The protein belongs to the UPF0235 family.

In Pelodictyon phaeoclathratiforme (strain DSM 5477 / BU-1), this protein is UPF0235 protein Ppha_2415.